Consider the following 504-residue polypeptide: MDLLSALTLETWVLLAVVLVLLYGFGTRTHGLFKKQGIPGPKPLPFFGTVLNYYMGLWKFDVECHKKYGKIWGLFDGQMPLFAITDTEMIKNVLVKECFSVFTNRRDFGPVGIMGKAVSVAKDEEWKRYRALLSPTFTSGRLKEMFPIIEQYGDILVKYLKQEAETGKPVTMKKVFGAYSMDVITSTSFGVNVDSLNNPKDPFVEKTKKLLRFDFFDPLFLSVVLFPFLTPIYEMLNICMFPKDSIEFFKKFVYRMKETRLDSVQKHRVDFLQLMMNAHNDSKDKESHTALSDMEITAQSIIFIFAGYEPTSSTLSFVLHSLATHPDTQKKLQEEIDRALPNKAPPTYDTVMEMEYLDMVLNETLRLYPIGNRLERVCKKDVEINGVFMPKGSVVMIPSYALHRDPQHWPEPEEFRPERFSKENKGSIDPYVYLPFGNGPRNCIGMRFALMNMKLALTKVLQNFSFQPCKETQIPLKLSRQGLLQPTKPIILKVVPRDEIITGS.

A heme-binding site is contributed by cysteine 443.

Belongs to the cytochrome P450 family. Heme is required as a cofactor.

The protein resides in the endoplasmic reticulum membrane. Its subcellular location is the microsome membrane. It catalyses the reaction an organic molecule + reduced [NADPH--hemoprotein reductase] + O2 = an alcohol + oxidized [NADPH--hemoprotein reductase] + H2O + H(+). Cytochromes P450 are a group of heme-thiolate monooxygenases. In liver microsomes, this enzyme is involved in an NADPH-dependent electron transport pathway. It oxidizes a variety of structurally unrelated compounds, including steroids, fatty acids, and xenobiotics. In Rattus norvegicus (Rat), this protein is Cytochrome P450 3A1 (Cyp3a1).